The primary structure comprises 227 residues: Cytochrome c oxidase subunit 2 (227 aa).

Topologically, residues 1 to 14 (MAHPFQTGLQDATS) are mitochondrial intermembrane. The helical transmembrane segment at 15–45 (PIMEELLHFHDHTLMIVFLISSLVLYIISIM) threads the bilayer. Topologically, residues 46–59 (LTTKLTHTNTMDAQ) are mitochondrial matrix. A helical transmembrane segment spans residues 60–87 (EVETVWTILPAIILIMIALPSLRILYMM). Over 88-227 (DEINNPSLTV…YFEKWSASML (140 aa)) the chain is Mitochondrial intermembrane. Residues His-161, Cys-196, Glu-198, Cys-200, His-204, and Met-207 each coordinate Cu cation. Glu-198 is a binding site for Mg(2+). Tyr-218 bears the Phosphotyrosine mark.

This sequence belongs to the cytochrome c oxidase subunit 2 family. As to quaternary structure, component of the cytochrome c oxidase (complex IV, CIV), a multisubunit enzyme composed of 14 subunits. The complex is composed of a catalytic core of 3 subunits MT-CO1, MT-CO2 and MT-CO3, encoded in the mitochondrial DNA, and 11 supernumerary subunits COX4I, COX5A, COX5B, COX6A, COX6B, COX6C, COX7A, COX7B, COX7C, COX8 and NDUFA4, which are encoded in the nuclear genome. The complex exists as a monomer or a dimer and forms supercomplexes (SCs) in the inner mitochondrial membrane with NADH-ubiquinone oxidoreductase (complex I, CI) and ubiquinol-cytochrome c oxidoreductase (cytochrome b-c1 complex, complex III, CIII), resulting in different assemblies (supercomplex SCI(1)III(2)IV(1) and megacomplex MCI(2)III(2)IV(2)). Found in a complex with TMEM177, COA6, COX18, COX20, SCO1 and SCO2. Interacts with TMEM177 in a COX20-dependent manner. Interacts with COX20. Interacts with COX16. Cu cation serves as cofactor.

It is found in the mitochondrion inner membrane. The enzyme catalyses 4 Fe(II)-[cytochrome c] + O2 + 8 H(+)(in) = 4 Fe(III)-[cytochrome c] + 2 H2O + 4 H(+)(out). Its function is as follows. Component of the cytochrome c oxidase, the last enzyme in the mitochondrial electron transport chain which drives oxidative phosphorylation. The respiratory chain contains 3 multisubunit complexes succinate dehydrogenase (complex II, CII), ubiquinol-cytochrome c oxidoreductase (cytochrome b-c1 complex, complex III, CIII) and cytochrome c oxidase (complex IV, CIV), that cooperate to transfer electrons derived from NADH and succinate to molecular oxygen, creating an electrochemical gradient over the inner membrane that drives transmembrane transport and the ATP synthase. Cytochrome c oxidase is the component of the respiratory chain that catalyzes the reduction of oxygen to water. Electrons originating from reduced cytochrome c in the intermembrane space (IMS) are transferred via the dinuclear copper A center (CU(A)) of subunit 2 and heme A of subunit 1 to the active site in subunit 1, a binuclear center (BNC) formed by heme A3 and copper B (CU(B)). The BNC reduces molecular oxygen to 2 water molecules using 4 electrons from cytochrome c in the IMS and 4 protons from the mitochondrial matrix. The protein is Cytochrome c oxidase subunit 2 (MT-CO2) of Ailuropoda melanoleuca (Giant panda).